Consider the following 173-residue polypeptide: MTYFVFFLSLCFVLGGLAVASNPSPYYGVVGLVLASVAGCGWLLSLGVSFVSLVLFMVYLGGMLVVFVYSVALAADPFPEAWGDWRVVGYGVGFVGVLVMGLVVGGFIGCLNFGVITVDSTGMLSVRLDFSGVAMFYSRGVGMFLVAGWGLLLTLFVVLELVRGLSRGAIRAV.

Transmembrane regions (helical) follow at residues 1-21 (MTYFVFFLSLCFVLGGLAVAS), 27-47 (YGVVGLVLASVAGCGWLLSLG), 48-68 (VSFVSLVLFMVYLGGMLVVFV), 91-111 (GVGFVGVLVMGLVVGGFIGCL), and 141-161 (VGMFLVAGWGLLLTLFVVLEL).

It belongs to the complex I subunit 6 family.

It is found in the mitochondrion membrane. The catalysed reaction is a ubiquinone + NADH + 5 H(+)(in) = a ubiquinol + NAD(+) + 4 H(+)(out). Its function is as follows. Core subunit of the mitochondrial membrane respiratory chain NADH dehydrogenase (Complex I) that is believed to belong to the minimal assembly required for catalysis. Complex I functions in the transfer of electrons from NADH to the respiratory chain. The immediate electron acceptor for the enzyme is believed to be ubiquinone. This chain is NADH-ubiquinone oxidoreductase chain 6 (MT-ND6), found in Fratercula arctica (Atlantic puffin).